The chain runs to 249 residues: Large ribosomal subunit protein uL30A (249 aa).

It belongs to the universal ribosomal protein uL30 family. In terms of assembly, component of the small ribosomal subunit (SSU). Mature yeast ribosomes consist of a small (40S) and a large (60S) subunit. The 40S small subunit contains 1 molecule of ribosomal RNA (18S rRNA) and at least 33 different proteins. The large 60S subunit contains 3 rRNA molecules (25S, 5.8S and 5S rRNA) and at least 46 different proteins.

Its subcellular location is the cytoplasm. The protein resides in the nucleus. It localises to the nucleolus. Functionally, component of the ribosome, a large ribonucleoprotein complex responsible for the synthesis of proteins in the cell. The small ribosomal subunit (SSU) binds messenger RNAs (mRNAs) and translates the encoded message by selecting cognate aminoacyl-transfer RNA (tRNA) molecules. The large subunit (LSU) contains the ribosomal catalytic site termed the peptidyl transferase center (PTC), which catalyzes the formation of peptide bonds, thereby polymerizing the amino acids delivered by tRNAs into a polypeptide chain. The nascent polypeptides leave the ribosome through a tunnel in the LSU and interact with protein factors that function in enzymatic processing, targeting, and the membrane insertion of nascent chains at the exit of the ribosomal tunnel. This is Large ribosomal subunit protein uL30A (rlp7) from Schizosaccharomyces pombe (strain 972 / ATCC 24843) (Fission yeast).